The following is a 462-amino-acid chain: 3-ketoacyl CoA thiolase 1, peroxisomal (462 aa).

The N-terminal 34 residues, 1-34 (MEKAIQRQRVLLEHLQPIRHHTHDHSSSLTTSIC), are a transit peptide targeting the peroxisome. Cys-138 functions as the Acyl-thioester intermediate in the catalytic mechanism. Catalysis depends on proton acceptor residues His-393 and Cys-425. Gly-427 lines the substrate pocket.

This sequence belongs to the thiolase-like superfamily. Thiolase family. As to quaternary structure, homodimer.

The protein localises to the peroxisome. It carries out the reaction an acyl-CoA + acetyl-CoA = a 3-oxoacyl-CoA + CoA. The protein operates within aromatic compound metabolism. Its pathway is lipid metabolism; fatty acid metabolism. Component of the floral volatile benzenoid/phenylpropanoid (FVBP) biosynthetic pathway. Thiolase that catalyzes the conversion of 3-oxo-3-phenylpropionyl-CoA (benzoylacetyl-CoA) to benzoyl-CoA. This Petunia hybrida (Petunia) protein is 3-ketoacyl CoA thiolase 1, peroxisomal.